The sequence spans 164 residues: Pyruvoyl-dependent arginine decarboxylase (164 aa).

The residue at position 52 (Ser-52) is a Pyruvic acid (Ser).

It belongs to the PdaD family. Pyruvate serves as cofactor.

It carries out the reaction L-arginine + H(+) = agmatine + CO2. The sequence is that of Pyruvoyl-dependent arginine decarboxylase from Methanococcus vannielii (strain ATCC 35089 / DSM 1224 / JCM 13029 / OCM 148 / SB).